A 428-amino-acid polypeptide reads, in one-letter code: Putative G-protein coupled receptor F59B2.13 (428 aa).

Residues 1–30 are Extracellular-facing; the sequence is MSNNTTIPSKTATDICLTDRQMSLSVSSTE. 2 N-linked (GlcNAc...) asparagine glycosylation sites follow: Asn-3 and Asn-4. The chain crosses the membrane as a helical span at residues 31–51; the sequence is GVLIGTIIPILVLFGISGNIL. Residues 52 to 67 lie on the Cytoplasmic side of the membrane; that stretch reads NLTVLLAPNLRTRSNQ. Residues 68–88 traverse the membrane as a helical segment; the sequence is LLACLAVADIVSLVVILPHSM. Residues 89–110 lie on the Extracellular side of the membrane; that stretch reads AHYETFETALWFRKFYGKYKFQ. A helical membrane pass occupies residues 111 to 131; that stretch reads IIAMTNWSIATATWLVFVICL. Over 132-154 the chain is Cytoplasmic; it reads ERLIIIKYPLSVRKQAKFFTPRN. Residues 155–175 form a helical membrane-spanning segment; that stretch reads VVTIIVVTTFILTSYNHVSHA. Topologically, residues 176–222 are extracellular; it reads CAEKLFCNGTQYHVACLGIDSERWFRNEPNPNSEFMKSVVRVAPQVN. N-linked (GlcNAc...) asparagine glycosylation occurs at Asn-183. The helical transmembrane segment at 223-243 threads the bilayer; the sequence is AIFVVLIPVVLVIIFNVMLIL. Residues 244–278 lie on the Cytoplasmic side of the membrane; it reads TLRQRTKLFEPSKTIRGDSQFTQLQSKTEHKVTIT. A helical membrane pass occupies residues 279–299; that stretch reads VTAIVTCFTITQSPSAFVTFL. Over 300-309 the chain is Extracellular; it reads SSYVHRDWVT. The chain crosses the membrane as a helical span at residues 310-330; it reads LSAICTILVVLGKALNFVLFC. Residues 331 to 428 are Cytoplasmic-facing; the sequence is LSSASFRQRL…KEFRRGTSFV (98 aa).

Belongs to the G-protein coupled receptor 1 family.

It localises to the cell membrane. This is Putative G-protein coupled receptor F59B2.13 from Caenorhabditis elegans.